A 276-amino-acid polypeptide reads, in one-letter code: Pantothenate synthetase (276 aa).

27-34 (MGNLHDGH) is an ATP binding site. The Proton donor role is filled by H34. Q58 contributes to the (R)-pantoate binding site. Beta-alanine is bound at residue Q58. Residue 145-148 (GKKD) coordinates ATP. Q151 contacts (R)-pantoate. ATP-binding positions include I174 and 182–185 (LSSR).

This sequence belongs to the pantothenate synthetase family. In terms of assembly, homodimer.

The protein resides in the cytoplasm. The enzyme catalyses (R)-pantoate + beta-alanine + ATP = (R)-pantothenate + AMP + diphosphate + H(+). It functions in the pathway cofactor biosynthesis; (R)-pantothenate biosynthesis; (R)-pantothenate from (R)-pantoate and beta-alanine: step 1/1. Its function is as follows. Catalyzes the condensation of pantoate with beta-alanine in an ATP-dependent reaction via a pantoyl-adenylate intermediate. In Aromatoleum aromaticum (strain DSM 19018 / LMG 30748 / EbN1) (Azoarcus sp. (strain EbN1)), this protein is Pantothenate synthetase.